The primary structure comprises 400 residues: Spermatogenic leucine zipper protein 1 (400 aa).

Residues 1–27 (MADSDSSSEMPAHSPSPSPIPCAKQKP) form a disordered region. A Phosphoserine modification is found at Ser-106. A helix-loop-helix motif region spans residues 116–127 (RNKLRFKDDLFI). Positions 128–193 (HFDPERENTM…HIRGEYRKLR (66 aa)) are basic motif. Coiled-coil stretches lie at residues 182 to 231 (SVHI…KDIV) and 268 to 293 (LIAALLENECQILQQRVDILRELHLH). Position 207 is a phosphoserine (Ser-207). Residues 252–273 (LEEQVKKLSQDTHSLHLIAALL) form a leucine-zipper region. Residues 295-332 (AGPGHEKPLQTSGEQDKKCGEQDKKCGEQDKKCGEQDK) form a disordered region.

In terms of assembly, interacts with PPP1CC isoform gamma-2. Post-translationally, phosphorylated by MAPK1/ERK2 and MAPK3/ERK1.

The protein localises to the cytoplasm. The protein resides in the nucleus. In terms of biological role, transcription factor that binds to the DNA sequence 5'-CANNTG-3'(E box) and the G-box motif. May play an important role in the regulation of cell proliferation and differentiation during spermatogenesis. The chain is Spermatogenic leucine zipper protein 1 (Spz1) from Rattus norvegicus (Rat).